The primary structure comprises 159 residues: Capsid protein (159 aa).

At Ser2 the chain carries N-acetylserine; by host.

It belongs to the virgaviridae capsid protein family.

It is found in the virion. Functionally, capsid protein self-assembles to form rod-shaped virions about 18 nm in diameter with a central canal enclosing the viral genomic RNA. This chain is Capsid protein (CP), found in Nicotiana tabacum (Common tobacco).